A 367-amino-acid chain; its full sequence is Nociceptin receptor (367 aa).

The Extracellular portion of the chain corresponds to 1 to 45 (MESLFPAPYWEVLYGSHFQGNLSLLNETVPHHLLLNASHSAFLPL). Asparagine 21, asparagine 26, and asparagine 36 each carry an N-linked (GlcNAc...) asparagine glycan. A helical membrane pass occupies residues 46-71 (GLKVTIVGLYLAVCIGGLLGNCLVMY). The Cytoplasmic portion of the chain corresponds to 72 to 84 (VILRHTKMKTATN). The chain crosses the membrane as a helical span at residues 85-106 (IYIFNLALADTLVLLTLPFQGT). Residues 107–121 (DILLGFWPFGNALCK) are Extracellular-facing. Cysteine 120 and cysteine 197 are oxidised to a cystine. A helical transmembrane segment spans residues 122–143 (TVIAIDYYNMFTSTFTLTAMSV). Residues 144–162 (DRYVAICHPIRALDVRTSS) lie on the Cytoplasmic side of the membrane. A helical membrane pass occupies residues 163-185 (KAQAVNVAIWALASVVGVPVAIM). Over 186–208 (GSAQVEDEEIECLVEIPAPQDYW) the chain is Extracellular. A helical membrane pass occupies residues 209–233 (GPVFAICIFLFSFIIPVLIISVCYS). The Cytoplasmic segment spans residues 234–261 (LMIRRLRGVRLLSGSREKDRNLRRITRL). The helical transmembrane segment at 262–282 (VLVVVAVFVGCWTPVQVFVLV) threads the bilayer. Topologically, residues 283–297 (QGLGVQPGSETAVAI) are extracellular. Residues 298–319 (LRFCTALGYVNSCLNPILYAFL) form a helical membrane-spanning segment. The Cytoplasmic segment spans residues 320 to 367 (DENFKACFRKFCCASSLHREMQVSDRVRSIAKDVGLGCKTSETVPRPA). The S-palmitoyl cysteine moiety is linked to residue cysteine 331.

It belongs to the G-protein coupled receptor 1 family. Phosphorylation at Ser-360 requires GRK3. Highly expressed in several brain areas, the intestine, liver and spleen. Detected in sympathetic stellate ganglion neurons.

The protein resides in the cell membrane. It is found in the cytoplasmic vesicle. In terms of biological role, G-protein coupled opioid receptor that functions as a receptor for the endogenous neuropeptide nociceptin. Ligand binding causes a conformation change that triggers signaling via guanine nucleotide-binding proteins (G proteins) and modulates the activity of down-stream effectors. Signaling via G proteins mediates inhibition of adenylate cyclase activity and calcium channel activity. Arrestins modulate signaling via G proteins and mediate the activation of alternative signaling pathways that lead to the activation of MAP kinases. Plays a role in modulating nociception and the perception of pain. Plays a role in the regulation of locomotor activity by the neuropeptide nociceptin. The protein is Nociceptin receptor (Oprl1) of Rattus norvegicus (Rat).